The sequence spans 770 residues: Probable capsid and replication-associated protein (770 aa).

2 disordered regions span residues 645–682 and 697–717; these read QRMQ…QKES and WEDS…TQTV. Residues 646 to 656 are compositionally biased toward polar residues; it reads RMQQQPTTTDI. A compositionally biased stretch (basic and acidic residues) spans 666 to 681; it reads RDTEVYHSSQEGEQKE. Low complexity predominate over residues 703 to 717; that stretch reads EESGSQSSEEETQTV.

It belongs to the anelloviridae capsid protein family.

The protein resides in the virion. May self assemble to form an icosahedral capsid. Presumably essential to initiate and monitor viral genome replication by a rolling circle mechanism. This Homo sapiens (Human) protein is Probable capsid and replication-associated protein.